A 139-amino-acid chain; its full sequence is Non-structural protein 1 (139 aa).

The DLNP; interaction with MAP1B signature appears at 136–139 (DLNS).

The protein belongs to the pneumovirus non-structural protein 1 family. Monomer. Homomultimer. Heteromultimer with NS2. Interacts with the matrix protein M. Interacts with host ELOC and CUL2; this interaction allows NS1 to form an active E3 ligase with ELOC and CUL2. Interacts with host IRF3; this interaction leads to the disrupted association of IRF3 with CREBBP and thus reduced binding of IRF3 to the IFN-beta promoter. Interacts with host MAVS; this interaction prevents MAVS binding to RIGI and inhibits signaling pathway leading to interferon production. Interacts with host MAP1B/microtubule-associated protein 1B. Interacts with host TRIM25 (via SPRY domain); this interaction suppresses RIGI ubiquitination and results in decreased interaction between RIGI and MAVS.

The protein localises to the host cytoplasm. The protein resides in the host mitochondrion. Its subcellular location is the host nucleus. Its function is as follows. Plays a major role in antagonizing the type I IFN-mediated antiviral response by degrading or inhibiting multiple cellular factors required for either IFN induction or response pathways. Acts cooperatively with NS2 to repress activation and nuclear translocation of host IFN-regulatory factor IRF3. Also disrupts the association of IRF3 with CREBBP. Interacts with host mitochondrial-associated membrane (MAM) MAVS and prevents the interaction with RIGI. Interacts with TRIM25 to suppress TRIM25-mediated RIGI ubiquitination and thereby RIGI-MAVS interaction. Together with NS2, participates in the proteasomal degradation of host STAT2, IRF3, IRF7, TBK1 and RIGI through a NS-degradasome involving CUL2 and Elongin-C. The degradasome requires an intact mitochondrial MAVS. Decreases the levels of host TRAF3 and IKBKE/IKK-epsilon. As functions other than disruptions of the type I IFN-mediated antiviral signaling pathways, induces host SOCS1 and SOCS3 expression. Suppresses premature apoptosis by an NF-kappa-B-dependent, interferon-independent mechanism and thus facilitates virus growth. Additionally, NS1 may serve some inhibitory role in viral transcription and RNA replication. Suppresses proliferation and activation of host CD103+ CD8+ cytotoxic T-lymphocytes and Th17 helper T-lymphocytes. The protein is Non-structural protein 1 (1C) of Homo sapiens (Human).